We begin with the raw amino-acid sequence, 177 residues long: Endoribonuclease YbeY (177 aa).

Zn(2+) contacts are provided by His-114, His-118, and His-124. Residues 154–177 (SYPEAIPTNPAPRRQASSSAGHIE) form a disordered region. Polar residues predominate over residues 168-177 (QASSSAGHIE).

This sequence belongs to the endoribonuclease YbeY family. Zn(2+) is required as a cofactor.

It localises to the cytoplasm. Its function is as follows. Single strand-specific metallo-endoribonuclease involved in late-stage 70S ribosome quality control and in maturation of the 3' terminus of the 16S rRNA. This chain is Endoribonuclease YbeY, found in Cellvibrio japonicus (strain Ueda107) (Pseudomonas fluorescens subsp. cellulosa).